A 5635-amino-acid polypeptide reads, in one-letter code: Hemicentin-1 (5635 aa).

Positions 1 to 21 (MISWEVVHTVFLFALLYSSLA) are cleaved as a signal peptide. Residues 41–216 (TLAFVFDVTG…EVLKWVEEAV (176 aa)) enclose the VWFA domain. Asparagine 349 and asparagine 390 each carry an N-linked (GlcNAc...) asparagine glycan. Ig-like C2-type domains lie at 431 to 517 (PKVT…FDVS), 520 to 607 (PPVI…VFLT), 612 to 697 (PKVT…STLR), 702 to 788 (PKLM…ITLD), 793 to 883 (PVFI…TTVT), 890 to 976 (PLIG…TSVV), 981 to 1067 (PTIQ…VQLT), 1072 to 1166 (PRVF…VKLN), 1171 to 1255 (PKIQ…TEIT), 1262 to 1354 (PTVE…YNLK), 1358 to 1447 (PPVI…FNID), 1452 to 1541 (PTII…IKLT), 1546 to 1634 (PSIK…FHVD), 1638 to 1724 (PPMI…KEIK), 1733 to 1821 (PAIE…FEVT), 1826 to 1914 (PTIK…IQLH), 1919 to 2007 (PSLE…YSLQ), 2012 to 2097 (PSIS…RDID), 2104 to 2190 (PNIM…YNVN), 2195 to 2285 (PNIG…YNLQ), 2290 to 2379 (PTIT…YDLS), 2384 to 2470 (PSII…RKIF), 2478 to 2564 (PHIV…RSFS), 2571 to 2662 (PTIA…YEVK), 2666 to 2763 (PPII…VNIQ), 2766 to 2864 (PSFQ…YDVR), 2868 to 2959 (PPII…FNLN), 2964 to 3051 (PSVI…FSLT), 3056 to 3146 (PSIK…FHLN), 3151 to 3240 (PSIE…YFLS), 3245 to 3335 (PSVA…FNLN), 3340 to 3429 (PTIR…YNLQ), 3434 to 3516 (PNMD…GEVS), 3527 to 3615 (PHIN…YLVR), 3620 to 3708 (PNIA…FILT), 3713 to 3797 (PNIK…RRID), 3804 to 3892 (PSIA…VDLT), 3897 to 3983 (PSIA…VTLH), 3988 to 4076 (PVIQ…LNVQ), 4079 to 4164 (PVIS…TKLT), 4169 to 4255 (PRIR…VSLT), 4260 to 4344 (PTFT…GFVY), 4348 to 4435 (PPVF…MSLT), and 4440 to 4527 (PIIT…VIVQ). An intrachain disulfide couples cysteine 451 to cysteine 499. N-linked (GlcNAc...) asparagine glycosylation is found at asparagine 528, asparagine 550, asparagine 573, and asparagine 620. Cysteines 541 and 591 form a disulfide. A disulfide bridge connects residues cysteine 633 and cysteine 681. Asparagine 693 is a glycosylation site (N-linked (GlcNAc...) asparagine). Cysteines 723 and 772 form a disulfide. N-linked (GlcNAc...) asparagine glycosylation is present at asparagine 809. 2 disulfides stabilise this stretch: cysteine 814/cysteine 867 and cysteine 911/cysteine 960. An N-linked (GlcNAc...) asparagine glycan is attached at asparagine 970. Disulfide bonds link cysteine 1002–cysteine 1051 and cysteine 1101–cysteine 1150. N-linked (GlcNAc...) asparagine glycosylation occurs at asparagine 1158. The cysteines at positions 1192 and 1241 are disulfide-linked. N-linked (GlcNAc...) asparagine glycosylation is present at asparagine 1272. A disulfide bridge links cysteine 1288 with cysteine 1338. Asparagine 1369 is a glycosylation site (N-linked (GlcNAc...) asparagine). Intrachain disulfides connect cysteine 1382–cysteine 1431 and cysteine 1475–cysteine 1525. The N-linked (GlcNAc...) asparagine glycan is linked to asparagine 1552. 4 cysteine pairs are disulfide-bonded: cysteine 1569-cysteine 1618, cysteine 1663-cysteine 1712, cysteine 1756-cysteine 1805, and cysteine 1848-cysteine 1898. Asparagine 1929 carries an N-linked (GlcNAc...) asparagine glycan. 2 disulfide bridges follow: cysteine 1942–cysteine 1991 and cysteine 2033–cysteine 2083. Residues asparagine 2112 and asparagine 2155 are each glycosylated (N-linked (GlcNAc...) asparagine). Intrachain disulfides connect cysteine 2125–cysteine 2174, cysteine 2218–cysteine 2269, and cysteine 2314–cysteine 2363. Asparagine 2395 is a glycosylation site (N-linked (GlcNAc...) asparagine). 3 cysteine pairs are disulfide-bonded: cysteine 2408–cysteine 2457, cysteine 2501–cysteine 2550, and cysteine 2597–cysteine 2646. An N-linked (GlcNAc...) asparagine glycan is attached at asparagine 2689. 2 disulfide bridges follow: cysteine 2696–cysteine 2745 and cysteine 2799–cysteine 2848. Asparagine 2887 carries an N-linked (GlcNAc...) asparagine glycan. Cysteine 2894 and cysteine 2943 are joined by a disulfide. Asparagine 2973 carries an N-linked (GlcNAc...) asparagine glycan. Cystine bridges form between cysteine 2986/cysteine 3035, cysteine 3081/cysteine 3130, cysteine 3173/cysteine 3224, cysteine 3268/cysteine 3319, cysteine 3364/cysteine 3413, and cysteine 3457/cysteine 3506. 2 N-linked (GlcNAc...) asparagine glycosylation sites follow: asparagine 3221 and asparagine 3300. Asparagine 3530 carries N-linked (GlcNAc...) asparagine glycosylation. 2 disulfide bridges follow: cysteine 3550–cysteine 3599 and cysteine 3643–cysteine 3692. 2 N-linked (GlcNAc...) asparagine glycosylation sites follow: asparagine 3689 and asparagine 3727. A disulfide bond links cysteine 3734 and cysteine 3783. Asparagine 3812 carries N-linked (GlcNAc...) asparagine glycosylation. Intrachain disulfides connect cysteine 3825-cysteine 3876, cysteine 3918-cysteine 3967, cysteine 4009-cysteine 4058, cysteine 4100-cysteine 4148, cysteine 4190-cysteine 4239, cysteine 4281-cysteine 4328, cysteine 4371-cysteine 4419, cysteine 4461-cysteine 4509, cysteine 4541-cysteine 4578, cysteine 4545-cysteine 4583, cysteine 4556-cysteine 4568, cysteine 4598-cysteine 4635, cysteine 4602-cysteine 4640, cysteine 4613-cysteine 4625, cysteine 4655-cysteine 4692, cysteine 4659-cysteine 4697, cysteine 4670-cysteine 4682, cysteine 4712-cysteine 4749, cysteine 4716-cysteine 4754, cysteine 4727-cysteine 4739, cysteine 4769-cysteine 4806, cysteine 4773-cysteine 4811, cysteine 4784-cysteine 4796, cysteine 4826-cysteine 4863, cysteine 4830-cysteine 4868, and cysteine 4841-cysteine 4853. A glycan (N-linked (GlcNAc...) asparagine) is linked at asparagine 4029. N-linked (GlcNAc...) asparagine glycosylation is found at asparagine 4401 and asparagine 4491. TSP type-1 domains follow at residues 4529–4584 (HGGF…KPCP), 4586–4641 (DGSW…RPCP), 4643–4698 (HGAW…RNCP), 4700–4755 (HGKW…DPCP), 4757–4812 (HGNW…DMCP), and 4814–4869 (DGSW…QACP). The N-linked (GlcNAc...) asparagine glycan is linked to asparagine 4606. The 223-residue stretch at 4871-5093 (GPQRARGSVI…SKGDRSNQCP (223 aa)) folds into the Nidogen G2 beta-barrel domain. Asparagine 4894 and asparagine 5040 each carry an N-linked (GlcNAc...) asparagine glycan. Positions 5107-5146 (DEDECAAGNPCSHSCHNAMGTYYCSCPKGLTIAADGRTCQ) constitute an EGF-like 1; calcium-binding domain. 3 disulfides stabilise this stretch: cysteine 5111–cysteine 5121, cysteine 5117–cysteine 5130, and cysteine 5132–cysteine 5145. Residues 5147–5191 (DIDECALGRHTCHAGQDCDNTIGSYRCVVRCGSGFRRTSDGLSCQ) form the EGF-like 2; calcium-binding domain. The region spanning 5192 to 5229 (DINECQESSPCHQRCFNAIGSFHCGCEPGYQLKGRKCM) is the EGF-like 3; calcium-binding domain. Intrachain disulfides connect cysteine 5196-cysteine 5206, cysteine 5202-cysteine 5215, and cysteine 5217-cysteine 5228. The EGF-like 4; calcium-binding domain occupies 5230-5271 (DVNECRQNVCRPDQHCKNTRGGYKCIDLCPNGMTKAENGTCI). Residue asparagine 5267 is glycosylated (N-linked (GlcNAc...) asparagine). Residues 5272-5307 (DIDECKDGTHQCRYNQICENTRGSYRCVCPRGYRSQ) enclose the EGF-like 5; calcium-binding domain. 8 disulfide bridges follow: cysteine 5276–cysteine 5289, cysteine 5283–cysteine 5298, cysteine 5319–cysteine 5330, cysteine 5326–cysteine 5339, cysteine 5341–cysteine 5354, cysteine 5436–cysteine 5446, cysteine 5442–cysteine 5455, and cysteine 5457–cysteine 5470. The 41-residue stretch at 5315–5355 (DINECEQVPKPCAHQCSNTPGSFKCICPPGQHLLGDGKSCA) folds into the EGF-like 6; calcium-binding domain. The 40-residue stretch at 5432 to 5471 (DIDECENTDACQHECKNTFGSYQCICPPGYQLTHNGKTCQ) folds into the EGF-like 7; calcium-binding domain. Asparagine 5615 carries N-linked (GlcNAc...) asparagine glycosylation.

As to expression, expressed in hair follicles and in the dermis (at protein level). In terms of tissue distribution, expressed in skin fibroblasts and retinal pigment epithelium (RPE) cells.

The protein resides in the secreted. It localises to the extracellular space. It is found in the extracellular matrix. Its subcellular location is the basement membrane. The protein localises to the cytoplasm. The protein resides in the cell junction. It localises to the cleavage furrow. Functionally, involved in transforming growth factor beta-mediated rearrangement of the podocyte cytoskeleton which includes reduction of F-actin fibers and broadening, flattening and elongation of podocytes. Plays a role in basement membrane organization. May promote cleavage furrow maturation during cytokinesis in preimplantation embryos. May play a role in the architecture of adhesive and flexible epithelial cell junctions. May play a role during myocardial remodeling by imparting an effect on cardiac fibroblast migration. The sequence is that of Hemicentin-1 (HMCN1) from Homo sapiens (Human).